We begin with the raw amino-acid sequence, 500 residues long: MEAEDIQEELTCPICLDYFQDPVSIECGHNFCRGCLHRNWAPGGGPFPCPECRHPSAPAALRPNWALARLTEKTQRRRLGPVPPGLCGRHWEPLRLFCEDDQRPVCLVCRESQEHQTHAMAPIDEAFESYRTGNFDIHVDEWKRRLIRLLLYHFKQEEKLLKSQRNLVAKMKKVMHLQDVEVKNATQWKDKIKSQRMRISTEFSKLHNFLVEEEDLFLQRLNKEEEETKKKLNENTLKLNQTIASLKKLILEVGEKSQAPTLELLQNPKEVLTRSEIQDVNYSLEAVKVKTVCQIPLMKEMLKRFQVAVNLAEDTAHPKLVFSQEGRYVKNTASASSWPVFSSAWNYFAGWRNPQKTAFVERFQHLPCVLGKNVFTSGKHYWEVESRDSLEVAVGVCREDVMGITDRSKMSPDVGIWAIYWSAAGYWPLIGFPGTPTQQEPALHRVGVYLDRGTGNVSFYSAVDGVHLHTFSCSSVSRLRPFFWLSPLASLVIPPVTDRK.

The segment at 12 to 53 adopts an RING-type zinc-finger fold; it reads CPICLDYFQDPVSIECGHNFCRGCLHRNWAPGGGPFPCPECR. Residues 82–123 form a B box-type zinc finger; sequence VPPGLCGRHWEPLRLFCEDDQRPVCLVCRESQEHQTHAMAPI. Zn(2+) is bound by residues Cys87, His90, Cys109, and His115. The stretch at 212-253 forms a coiled coil; it reads EEEDLFLQRLNKEEEETKKKLNENTLKLNQTIASLKKLILEV. Positions 288-500 constitute a B30.2/SPRY domain; that stretch reads KVKTVCQIPL…LVIPPVTDRK (213 aa).

This sequence belongs to the TRIM/RBCC family. As to quaternary structure, homotrimer.

Its subcellular location is the cytoplasm. It carries out the reaction S-ubiquitinyl-[E2 ubiquitin-conjugating enzyme]-L-cysteine + [acceptor protein]-L-lysine = [E2 ubiquitin-conjugating enzyme]-L-cysteine + N(6)-ubiquitinyl-[acceptor protein]-L-lysine.. It participates in protein modification; protein ubiquitination. Its function is as follows. E3 ubiquitin-protein ligase. Mediates 'Lys-63'-linked polyubiquitination of the innate immune receptor RIGI, this linkage doesn't lead to proteasomal degradation but seems to enhance IFN induction. The chain is E3 ubiquitin-protein ligase TRIM4 (TRIM4) from Homo sapiens (Human).